Here is a 95-residue protein sequence, read N- to C-terminus: Aspartyl/glutamyl-tRNA(Asn/Gln) amidotransferase subunit C (95 aa).

It belongs to the GatC family. In terms of assembly, heterotrimer of A, B and C subunits.

It catalyses the reaction L-glutamyl-tRNA(Gln) + L-glutamine + ATP + H2O = L-glutaminyl-tRNA(Gln) + L-glutamate + ADP + phosphate + H(+). It carries out the reaction L-aspartyl-tRNA(Asn) + L-glutamine + ATP + H2O = L-asparaginyl-tRNA(Asn) + L-glutamate + ADP + phosphate + 2 H(+). Its function is as follows. Allows the formation of correctly charged Asn-tRNA(Asn) or Gln-tRNA(Gln) through the transamidation of misacylated Asp-tRNA(Asn) or Glu-tRNA(Gln) in organisms which lack either or both of asparaginyl-tRNA or glutaminyl-tRNA synthetases. The reaction takes place in the presence of glutamine and ATP through an activated phospho-Asp-tRNA(Asn) or phospho-Glu-tRNA(Gln). The polypeptide is Aspartyl/glutamyl-tRNA(Asn/Gln) amidotransferase subunit C (Chlorobium phaeovibrioides (strain DSM 265 / 1930) (Prosthecochloris vibrioformis (strain DSM 265))).